The following is a 196-amino-acid chain: Probable GTP-binding protein EngB (196 aa).

One can recognise an EngB-type G domain in the interval 22–195; that stretch reads NIPEIALVGR…WQWIEERMGK (174 aa). Residues 30-37, 57-61, 75-78, 142-145, and 174-176 each bind GTP; these read GRSNVGKS, GKTQT, DVPG, TKID, and FSA. Positions 37 and 59 each coordinate Mg(2+).

Belongs to the TRAFAC class TrmE-Era-EngA-EngB-Septin-like GTPase superfamily. EngB GTPase family. Mg(2+) is required as a cofactor.

In terms of biological role, necessary for normal cell division and for the maintenance of normal septation. This chain is Probable GTP-binding protein EngB, found in Limosilactobacillus reuteri (strain DSM 20016) (Lactobacillus reuteri).